The following is a 205-amino-acid chain: Adenylyl-sulfate kinase (205 aa).

Residue 35-42 (GLSGAGKS) participates in ATP binding. Residue Ser-109 is the Phosphoserine intermediate of the active site.

This sequence belongs to the APS kinase family.

The enzyme catalyses adenosine 5'-phosphosulfate + ATP = 3'-phosphoadenylyl sulfate + ADP + H(+). Its pathway is sulfur metabolism; hydrogen sulfide biosynthesis; sulfite from sulfate: step 2/3. In terms of biological role, catalyzes the synthesis of activated sulfate. This chain is Adenylyl-sulfate kinase, found in Acaryochloris marina (strain MBIC 11017).